We begin with the raw amino-acid sequence, 417 residues long: Dibenzothiophene monooxygenase (417 aa).

Residues 18-124 (NDPVAVARGL…HLYTQIAQNN (107 aa)) are helical N-terminus. FMN contacts are provided by residues Tyr-96, 129 to 134 (NASSEN), 159 to 163 (KHFCS), Arg-282, 369 to 370 (AR), and His-391. The segment at 125–233 (WWTGNASSEN…KVEPDEVLGA (109 aa)) is central beta-barrel N-terminus. The interval 131 to 142 (SSENNSHVLDWK) is lid loop. Residues 234-417 (PNAFVLAFIQ…GQYPIPGFTS (184 aa)) form a helical C-terminus region.

This sequence belongs to the DszC flavin monooxygenase family. In terms of assembly, homotetramer formed by a dimer of dimers; FMN binds between monomers of the homodimer.

It localises to the cytoplasm. The enzyme catalyses dibenzothiophene + 2 FMNH2 + 2 O2 = dibenzothiophene 5,5-dioxide + 2 FMN + 2 H2O + 2 H(+). It carries out the reaction dibenzothiophene + FMNH2 + O2 = dibenzothiophene 5-oxide + FMN + H2O + H(+). The catalysed reaction is dibenzothiophene 5-oxide + FMNH2 + O2 = dibenzothiophene 5,5-dioxide + FMN + H2O + H(+). It functions in the pathway sulfur metabolism; dibenzothiophene degradation. With respect to regulation, DBT degradation completely inhibited by Cu(2+), Mn(2+), p-chloromercuribenzoic acid, 2,2-bipyridyl, 1,10-phenanthroline, and strongly inhibited by Zn(2+), 5,5'- Dithiobis(2-nitrobenzoic acid) and 8-quinolinol. In terms of biological role, catalyzes the first step of the '4S' desulfurization pathway that removes covalently bound sulfur from dibenzothiophene (DBT) without breaking carbon-carbon bonds. Sulfur dioxygenase which converts DBT to DBT-sulfone (DBTO2 or DBT 5,5-dioxide) in a stepwise manner. Also acts on thioxanthen-9-one and 4,6-dimethyl DBT and 2,8-dimethyl DBT. In Rhodococcus erythropolis (Arthrobacter picolinophilus), this protein is Dibenzothiophene monooxygenase.